A 1278-amino-acid chain; its full sequence is Papilin (1278 aa).

The first 18 residues, 1–18 (MRLLLLVPLLLAPAPGSS), serve as a signal peptide directing secretion. 5 TSP type-1 domains span residues 26–80 (SDTW…ESCP), 304–361 (PGFS…HPCP), 362–421 (ETKR…ACNL), 423–481 (RCAA…EDCP), and 484–539 (SDQA…QPCH). 6 cysteine pairs are disulfide-bonded: C38–C74, C42–C79, C53–C64, C316–C355, C320–C360, and C331–C343. A disordered region spans residues 544–632 (VPSMQDVHTP…SGSGPHDCRH (89 aa)). Residues 582–599 (PSARGDHRGERGDPRGDQ) are compositionally biased toward basic and acidic residues. Low complexity predominate over residues 608-620 (PAPSLQQPPYQQP). Intrachain disulfides connect C754–C804, C763–C787, and C779–C800. The region spanning 754 to 804 (CLLPSAHGSCADWAARWYFVASVGQCNRFWYGGCHGNANNFASEQECMSSC) is the BPTI/Kunitz inhibitor domain. A disordered region spans residues 805 to 901 (QGSLHGPRRP…GGDAGSPAPP (97 aa)). Ig-like C2-type domains follow at residues 900-995 (PPFH…LRII), 1033-1128 (PSSH…VQLR), and 1133-1218 (LTIS…TEVK). C931 and C978 are joined by a disulfide. Residues 1014–1042 (RDPAQDFGQAGAAGPLGAIPSSHPQPANR) are disordered. Disulfide bonds link C1065–C1112 and C1154–C1202. The PLAC domain occupies 1231–1270 (PGRDCVDQPELANCDLILQAQLCGNEYYSSFCCASCSRFQ).

Belongs to the papilin family.

Its subcellular location is the secreted. This is Papilin (PAPLN) from Homo sapiens (Human).